A 311-amino-acid polypeptide reads, in one-letter code: Methionyl-tRNA formyltransferase (311 aa).

A (6S)-5,6,7,8-tetrahydrofolate-binding site is contributed by 110–113 (SLLP).

It belongs to the Fmt family.

It carries out the reaction L-methionyl-tRNA(fMet) + (6R)-10-formyltetrahydrofolate = N-formyl-L-methionyl-tRNA(fMet) + (6S)-5,6,7,8-tetrahydrofolate + H(+). Attaches a formyl group to the free amino group of methionyl-tRNA(fMet). The formyl group appears to play a dual role in the initiator identity of N-formylmethionyl-tRNA by promoting its recognition by IF2 and preventing the misappropriation of this tRNA by the elongation apparatus. The sequence is that of Methionyl-tRNA formyltransferase from Streptococcus pyogenes serotype M49 (strain NZ131).